The following is a 43-amino-acid chain: Large ribosomal subunit protein uL5 (43 aa).

Belongs to the universal ribosomal protein uL5 family. In terms of assembly, part of the 50S ribosomal subunit; part of the 5S rRNA/L5/L18/L25 subcomplex. Contacts the 5S rRNA and the P site tRNA. Forms a bridge to the 30S subunit in the 70S ribosome.

Its function is as follows. This is one of the proteins that bind and probably mediate the attachment of the 5S RNA into the large ribosomal subunit, where it forms part of the central protuberance. In the 70S ribosome it contacts protein S13 of the 30S subunit (bridge B1b), connecting the 2 subunits; this bridge is implicated in subunit movement. Contacts the P site tRNA; the 5S rRNA and some of its associated proteins might help stabilize positioning of ribosome-bound tRNAs. This Serratia marcescens protein is Large ribosomal subunit protein uL5 (rplE).